A 1852-amino-acid chain; its full sequence is Chitin synthase csmA (1852 aa).

The interval 1 to 20 (MVGTLPAGHTPSHVQSSLPS) is disordered. Residues 1–787 (MVGTLPAGHT…CWADLAKVGE (787 aa)) enclose the Myosin motor domain. N-linked (GlcNAc...) asparagine glycosylation is present at N58. ATP is bound at residue 102-109 (GESGAGKT). The interval 599 to 646 (SSKPLRMPSMARRKTSPASRLTFDATPAEDPYETESQTGSSAKNSSAK) is disordered. Residue N642 is glycosylated (N-linked (GlcNAc...) asparagine). The segment at 667 to 691 (LDIVNKCLTSGNLNPYFVFCLKPND) is actin-binding. N840 carries N-linked (GlcNAc...) asparagine glycosylation. Helical transmembrane passes span 895–915 (WMAIVWLLTFYIPTPAIRYIG) and 930–950 (FAINLLIWLACAIAVFIIVGF). Residues 958 to 1017 (QHVYSPAELSSHDGKDGHSSYTSIRGLVLDLGEFMDSHYPGIVPDSALKKYAGVDSTALF) enclose the Cytochrome b5 heme-binding domain. N-linked (GlcNAc...) asparagine glycosylation is found at N1044 and N1195. A helical membrane pass occupies residues 1205–1225 (FILAISVLICSVIVFKFFAAL). N1428, N1462, and N1568 each carry an N-linked (GlcNAc...) asparagine glycan. 3 consecutive transmembrane segments (helical) span residues 1600–1620 (ISTIIMPVTVAYIVYLIVWLV), 1626–1646 (IPWTSFLLLAAIYGLQAIIFI), and 1653–1673 (MIGWMIIYILAIPVYSLALPL). The DEK-C domain maps to 1794-1849 (LPSDDAILSEIRDILRTADLMTVTKKNIKQELERRFGVNLDAKRPYINSATEAVLS).

The protein in the N-terminal section; belongs to the TRAFAC class myosin-kinesin ATPase superfamily. Myosin family. This sequence in the C-terminal section; belongs to the chitin synthase family. Class V subfamily. In terms of assembly, binds F-actin via its N-terminal myosin motor-like domain (MMD). Interacts with kibesin kinA.

The protein localises to the cell membrane. It is found in the cell septum. The protein resides in the cell tip. The catalysed reaction is [(1-&gt;4)-N-acetyl-beta-D-glucosaminyl](n) + UDP-N-acetyl-alpha-D-glucosamine = [(1-&gt;4)-N-acetyl-beta-D-glucosaminyl](n+1) + UDP + H(+). Polymerizes chitin, a structural polymer of the cell wall and septum, by transferring the sugar moiety of UDP-GlcNAc to the non-reducing end of the growing chitin polymer. Plays an important role in polarized hyphal cell wall synthesis and maintenance of cell wall integrity. Its role in growth and morphogenesis is particularly important under low osmotic conditions. This is Chitin synthase csmA from Emericella nidulans (Aspergillus nidulans).